The following is a 431-amino-acid chain: Histidinol dehydrogenase (431 aa).

3 residues coordinate NAD(+): Tyr-127, Gln-189, and Asn-212. Residues Ser-237, Gln-259, and His-262 each coordinate substrate. The Zn(2+) site is built by Gln-259 and His-262. Active-site proton acceptor residues include Glu-326 and His-327. Substrate contacts are provided by His-327, Asp-360, Glu-414, and His-419. A Zn(2+)-binding site is contributed by Asp-360. Residue His-419 participates in Zn(2+) binding.

This sequence belongs to the histidinol dehydrogenase family. Zn(2+) serves as cofactor.

It catalyses the reaction L-histidinol + 2 NAD(+) + H2O = L-histidine + 2 NADH + 3 H(+). Its pathway is amino-acid biosynthesis; L-histidine biosynthesis; L-histidine from 5-phospho-alpha-D-ribose 1-diphosphate: step 9/9. Its function is as follows. Catalyzes the sequential NAD-dependent oxidations of L-histidinol to L-histidinaldehyde and then to L-histidine. This Xanthomonas campestris pv. campestris (strain 8004) protein is Histidinol dehydrogenase.